The primary structure comprises 1682 residues: Collagen alpha-4(IV) chain (1682 aa).

The signal sequence occupies residues methionine 1 to glycine 32. The tract at residues serine 31 to arginine 56 is 7S domain. Asparagine 43 carries an N-linked (GlcNAc...) asparagine glycan. 2 disordered regions span residues arginine 56–proline 255 and proline 379–glycine 1453. The triple-helical region stretch occupies residues glycine 57–glycine 1451. The Cell attachment site signature appears at arginine 86 to aspartate 88. The span at proline 103–proline 116 shows a compositional bias: low complexity. Asparagine 134 is a glycosylation site (N-linked (GlcNAc...) asparagine). 2 consecutive short sequence motifs (cell attachment site) follow at residues arginine 137–aspartate 139 and arginine 181–aspartate 183. A compositionally biased stretch (pro residues) spans methionine 396 to phenylalanine 410. Residues proline 411–lysine 426 show a composition bias toward low complexity. Residues proline 487–proline 500 are compositionally biased toward pro residues. A compositionally biased stretch (basic and acidic residues) spans aspartate 578 to proline 601. Short sequence motifs (cell attachment site) lie at residues arginine 587–aspartate 589 and arginine 593–aspartate 595. Pro residues predominate over residues leucine 609 to proline 621. The span at glutamine 632–phenylalanine 647 shows a compositional bias: low complexity. N-linked (GlcNAc...) asparagine glycosylation occurs at asparagine 661. Low complexity predominate over residues proline 665–phenylalanine 682. The Cell attachment site signature appears at arginine 716 to aspartate 718. Low complexity-rich tracts occupy residues proline 742 to aspartate 758 and proline 857 to leucine 902. 2 stretches are compositionally biased toward basic and acidic residues: residues glutamate 911–glutamate 929 and aspartate 938–leucine 950. Over residues glycine 969 to glycine 978 the composition is skewed to gly residues. 2 short sequence motifs (cell attachment site) span residues arginine 980–aspartate 982 and arginine 992–aspartate 994. Positions aspartate 998–isoleucine 1010 are enriched in low complexity. A compositionally biased stretch (pro residues) spans aspartate 1011–serine 1025. Positions phenylalanine 1034 to proline 1044 are enriched in low complexity. The Cell attachment site signature appears at arginine 1144–aspartate 1146. Pro residues-rich tracts occupy residues proline 1223 to alanine 1235, aspartate 1248 to serine 1272, proline 1289 to glutamine 1304, proline 1340 to proline 1351, and alanine 1435 to aspartate 1444. Residues glycine 1457–serine 1682 enclose the Collagen IV NC1 domain. Intrachain disulfides connect cysteine 1472–cysteine 1561, cysteine 1505–cysteine 1558, cysteine 1517–cysteine 1523, cysteine 1580–cysteine 1678, cysteine 1614–cysteine 1675, and cysteine 1626–cysteine 1633.

It belongs to the type IV collagen family. In terms of assembly, there are six type IV collagen isoforms, alpha 1(IV)-alpha 6(IV), each of which can form a triple helix structure with 2 other chains to generate type IV collagen network. The alpha 3(IV) chain forms a triple helical protomer with alpha 4(IV) and alpha 5(IV); this triple helical structure dimerizes through NC1-NC1 domain interactions such that the alpha 3(IV), alpha 4(IV) and alpha 5(IV) chains of one protomer connect with the alpha 5(IV), alpha 4(IV) and alpha 3(IV) chains of the opposite protomer, respectively. Associates with LAMB2 at the neuromuscular junction and in GBM. In terms of processing, prolines at the third position of the tripeptide repeating unit (G-X-Y) are hydroxylated in some or all of the chains. Post-translationally, type IV collagens contain numerous cysteine residues which are involved in inter- and intramolecular disulfide bonding. 12 of these, located in the NC1 domain, are conserved in all known type IV collagens. The trimeric structure of the NC1 domains is stabilized by covalent bonds between Lys and Met residues. In terms of tissue distribution, expressed in Bruch's membrane, outer plexiform layer, inner nuclear layer, inner plexiform layer, ganglion cell layer, inner limiting membrane and around the blood vessels of the retina (at protein level). Highly expressed in kidney and lung. Detected at lower levels in heart, muscle and skin.

It localises to the secreted. The protein localises to the extracellular space. Its subcellular location is the extracellular matrix. It is found in the basement membrane. Its function is as follows. Type IV collagen is the major structural component of glomerular basement membranes (GBM), forming a 'chicken-wire' meshwork together with laminins, proteoglycans and entactin/nidogen. The sequence is that of Collagen alpha-4(IV) chain from Mus musculus (Mouse).